A 228-amino-acid polypeptide reads, in one-letter code: 3,4-dihydroxy-2-butanone 4-phosphate synthase (228 aa).

D-ribulose 5-phosphate contacts are provided by residues 37 to 38, D42, 150 to 154, and E174; these read RE and RRGHT. E38 contributes to the Mg(2+) binding site. Residue H153 participates in Mg(2+) binding.

It belongs to the DHBP synthase family. In terms of assembly, homodimer. Mg(2+) is required as a cofactor. The cofactor is Mn(2+).

It carries out the reaction D-ribulose 5-phosphate = (2S)-2-hydroxy-3-oxobutyl phosphate + formate + H(+). It participates in cofactor biosynthesis; riboflavin biosynthesis; 2-hydroxy-3-oxobutyl phosphate from D-ribulose 5-phosphate: step 1/1. Functionally, catalyzes the conversion of D-ribulose 5-phosphate to formate and 3,4-dihydroxy-2-butanone 4-phosphate. The sequence is that of 3,4-dihydroxy-2-butanone 4-phosphate synthase from Photobacterium profundum (strain SS9).